A 439-amino-acid polypeptide reads, in one-letter code: Vacuolar zinc transporter COT1 (439 aa).

The Cytoplasmic portion of the chain corresponds to 1 to 9; it reads MKLGSKQVK. Residues 10–30 traverse the membrane as a helical segment; the sequence is IISLLLLDTVFFGIEITTGYL. The Vacuolar segment spans residues 31 to 33; that stretch reads SHS. A helical membrane pass occupies residues 34–54; the sequence is LALIADSFHMLNDIISLVVAL. The Cytoplasmic portion of the chain corresponds to 55–76; the sequence is WAVNVAKNRNPDSTYTYGWKRA. Residues 77-97 form a helical membrane-spanning segment; it reads EILGALINAVFLIALCVSILI. Over 98–113 the chain is Vacuolar; it reads EALQRIIAPPVIENPK. The helical transmembrane segment at 114–134 threads the bilayer; the sequence is FVLYVGVAGLISNTVGLFLFH. At 135 to 244 the chain is on the cytoplasmic side; that stretch reads DNDQEHGHGH…RKRSLNMHGV (110 aa). 3 consecutive short sequence motifs (histidine repeat) follow at residues 140 to 144, 165 to 169, and 219 to 223; these read HGHGH, HTHAH, and SSHTI. Polar residues predominate over residues 207–230; it reads PENASKTPSYSTSSHTIASGGNYT. Positions 207-231 are disordered; sequence PENASKTPSYSTSSHTIASGGNYTE. Ser-225 is modified (phosphoserine). A helical membrane pass occupies residues 245–265; the sequence is FLHVLGDALGNIGVMLSAFFI. Over 266-274 the chain is Vacuolar; the sequence is WKTDYSWKY. Residues 275–295 form a helical membrane-spanning segment; the sequence is YTDPLVSLIITGIIFSSALPL. At 296–439 the chain is on the cytoplasmic side; sequence SCKASKILLQ…CNTADCLEDH (144 aa). Residue Lys-301 forms a Glycyl lysine isopeptide (Lys-Gly) (interchain with G-Cter in ubiquitin) linkage. The segment covering 388–402 has biased composition (basic and acidic residues); sequence TSTERAGDSQGDHLQ. Residues 388–408 are disordered; it reads TSTERAGDSQGDHLQNDPLSL.

Belongs to the cation diffusion facilitator (CDF) transporter (TC 2.A.4) family. SLC30A subfamily.

The protein resides in the vacuole membrane. The enzyme catalyses Zn(2+)(in) = Zn(2+)(out). Functionally, vacuolar transporter that regulates zinc homeostasis by mediating zinc transport and storage into the vacuole. Plays a role in resistance to zinc shock resulting from sudden influx of zinc into cytoplasm. May also participate in the regulation of cobalt levels under normal physiological conditions and may be important in the supply of metal that is required for metalloenzyme or cofactor synthesis. Involved in the resistance to cobalt and rhodium ions. This chain is Vacuolar zinc transporter COT1, found in Saccharomyces cerevisiae (strain ATCC 204508 / S288c) (Baker's yeast).